A 246-amino-acid chain; its full sequence is Probable transcriptional regulatory protein CLL_A1008 (246 aa).

It belongs to the TACO1 family.

It is found in the cytoplasm. The sequence is that of Probable transcriptional regulatory protein CLL_A1008 from Clostridium botulinum (strain Eklund 17B / Type B).